The sequence spans 728 residues: MDLNTKNNNKKVFEIIFENNVLRIEIGEISRQANGSVMLFYKDTVILSVAVCGDKKNSLNFLPLTVNYQEKLYAAGKIPGGFLRREGKPSDQEILCSRLIDRTIRPLFSKNFKNEVQLINMVLSSDPDGNNENIALLGSSLALLISDIPFFEPVSSVCVGKIGDNLIINPTLSQRENSSFFLILAGTKDSLNMVEMSSKEISENNFLESIKFGHEIIKKLCLFQTEIANQIGKTKIKIPLHNVNNLLEVEIKDKYFSEIEMILKNKCNVNNVKKSDILKKLKENVLENYKEKFLNNKKDNFNLLDLENQKLYLNEVEIIFDFLVRTIIRETILKENIRPDGRNSSEIRSITSRIDILPRTHGSALFTRGGTQSLAIVTLGTLRESKIIDDLSDEVDKRFMLHYNFPAFAVGSVGRYLAPSRREIGHGMLAEKALECVLPSENDFPYSIRVVSEILDSNGSSSQATICASSMALMSAGVPLKSLVAGVAMGLIVDDIDKINHYTILSDIEGLEDYQGDIDFKIAGTKVGITALQLDIKIKGITLEIFEKVLEQAKKDRIKILNEMEKVINKSRNEVSKYAPKVKMILIKPEKIRDIIGSGGKIINQIIEKHDNVKIDIMQDGKIYIMHQNMEIVDLTVTYIQNFLKKIKVENVYEVKILRFVKDKMDKTFGAIAEIFPGIEGFIHISKLENYKVDKVEDVLKIGQIILVKCIKINERGQIDLSKKDVFK.

Mg(2+) is bound by residues Asp513 and Asp519. Residues 580–640 (PKVKMILIKP…EIVDLTVTYI (61 aa)) form the KH domain. The 75-residue stretch at 650–724 (ENVYEVKILR…ERGQIDLSKK (75 aa)) folds into the S1 motif domain.

The protein belongs to the polyribonucleotide nucleotidyltransferase family. Mg(2+) serves as cofactor.

The protein resides in the cytoplasm. It carries out the reaction RNA(n+1) + phosphate = RNA(n) + a ribonucleoside 5'-diphosphate. Functionally, involved in mRNA degradation. Catalyzes the phosphorolysis of single-stranded polyribonucleotides processively in the 3'- to 5'-direction. The polypeptide is Polyribonucleotide nucleotidyltransferase (Phytoplasma mali (strain AT)).